The following is an 879-amino-acid chain: Alanine--tRNA ligase 1 (879 aa).

4 residues coordinate Zn(2+): H566, H570, C668, and H672.

This sequence belongs to the class-II aminoacyl-tRNA synthetase family. Requires Zn(2+) as cofactor.

It localises to the cytoplasm. It carries out the reaction tRNA(Ala) + L-alanine + ATP = L-alanyl-tRNA(Ala) + AMP + diphosphate. In terms of biological role, catalyzes the attachment of alanine to tRNA(Ala) in a two-step reaction: alanine is first activated by ATP to form Ala-AMP and then transferred to the acceptor end of tRNA(Ala). Also edits incorrectly charged Ser-tRNA(Ala) and Gly-tRNA(Ala) via its editing domain. The polypeptide is Alanine--tRNA ligase 1 (Lachnoclostridium phytofermentans (strain ATCC 700394 / DSM 18823 / ISDg) (Clostridium phytofermentans)).